The primary structure comprises 164 residues: uncharacterized protein (164 aa).

A compositionally biased stretch (polar residues) spans 1 to 29 (MLCVRSSSSNLESDTYLSRYSTRASAGTG). Positions 1–62 (MLCVRSSSSN…SKPSNNKNID (62 aa)) are disordered. Over residues 43 to 62 (SSDSSSSSSESKPSNNKNID) the composition is skewed to low complexity.

This is an uncharacterized protein from Schizosaccharomyces pombe (strain 972 / ATCC 24843) (Fission yeast).